Consider the following 168-residue polypeptide: Segregation and condensation protein B (168 aa).

The protein belongs to the ScpB family. Homodimer. Homodimerization may be required to stabilize the binding of ScpA to the Smc head domains. Component of a cohesin-like complex composed of ScpA, ScpB and the Smc homodimer, in which ScpA and ScpB bind to the head domain of Smc. The presence of the three proteins is required for the association of the complex with DNA.

The protein localises to the cytoplasm. In terms of biological role, participates in chromosomal partition during cell division. May act via the formation of a condensin-like complex containing Smc and ScpA that pull DNA away from mid-cell into both cell halves. The polypeptide is Segregation and condensation protein B (Caldanaerobacter subterraneus subsp. tengcongensis (strain DSM 15242 / JCM 11007 / NBRC 100824 / MB4) (Thermoanaerobacter tengcongensis)).